Consider the following 175-residue polypeptide: Cyclic pyranopterin monophosphate synthase (175 aa).

Substrate is bound by residues 78–80 (LCH) and 125–126 (ME). Aspartate 140 is a catalytic residue.

It belongs to the MoaC family. As to quaternary structure, homohexamer; trimer of dimers.

The enzyme catalyses (8S)-3',8-cyclo-7,8-dihydroguanosine 5'-triphosphate = cyclic pyranopterin phosphate + diphosphate. The protein operates within cofactor biosynthesis; molybdopterin biosynthesis. Functionally, catalyzes the conversion of (8S)-3',8-cyclo-7,8-dihydroguanosine 5'-triphosphate to cyclic pyranopterin monophosphate (cPMP). In Rhodopirellula baltica (strain DSM 10527 / NCIMB 13988 / SH1), this protein is Cyclic pyranopterin monophosphate synthase.